Reading from the N-terminus, the 363-residue chain is Early boundary activity protein 1 (363 aa).

Over residues 155-168 the composition is skewed to basic and acidic residues; it reads MDQEPEHKQSHEQD. A disordered region spans residues 155-242; it reads MDQEPEHKQS…NAKRRCPGFE (88 aa). Residues 198–209 show a composition bias toward acidic residues; that stretch reads EDLGLDDDDEDY. A BEN domain is found at 255 to 354; that stretch reads GPNGTEVSRI…TKCADENKML (100 aa).

As to quaternary structure, the heterotrimeric Elba complex consists of Elba1, Elba2 and Elba3.

It is found in the nucleus. Its function is as follows. The heterotrimeric Elba complex is required for chromatin domain boundary function during early embryogenesis. It binds to a 8-bp sequence 5'-CCAATAAG-3' in the Fab-7 insulator or boundary element in the bithorax complex and contributes to its insulator or boundary activity. Elba1 may act as a transcriptional repressor and binds the palindromic sequence 5'-CCAATTGG-3' to mediate transcriptional repression. The polypeptide is Early boundary activity protein 1 (Drosophila melanogaster (Fruit fly)).